Reading from the N-terminus, the 1142-residue chain is Error-prone DNA polymerase (1142 aa).

Positions 291–361 are disordered; sequence TSSPAQAARE…GTGAAAGTDR (71 aa). Composition is skewed to low complexity over residues 311–320 and 327–344; these read LRASLPAERP and GPAA…PGEP. Residues 345–355 are compositionally biased toward gly residues; sequence GLAGAGGGTGA.

This sequence belongs to the DNA polymerase type-C family. DnaE2 subfamily.

It localises to the cytoplasm. It carries out the reaction DNA(n) + a 2'-deoxyribonucleoside 5'-triphosphate = DNA(n+1) + diphosphate. Its function is as follows. DNA polymerase involved in damage-induced mutagenesis and translesion synthesis (TLS). It is not the major replicative DNA polymerase. The chain is Error-prone DNA polymerase from Anaeromyxobacter dehalogenans (strain 2CP-1 / ATCC BAA-258).